A 438-amino-acid chain; its full sequence is Putative galacturan 1,4-alpha-galacturonidase A (438 aa).

The signal sequence occupies residues 1–21 (MRMPSAISIGVFAGLSLAASA). Residues Asn28, Asn102, Asn111, and Asn197 are each glycosylated (N-linked (GlcNAc...) asparagine). PbH1 repeat units lie at residues 186–222 (SSHI…DTYR) and 223–244 (SDHI…AFKG). Asp237 (proton donor) is an active-site residue. Residues Asn245, Asn253, Asn279, Asn325, Asn353, Asn372, and Asn388 are each glycosylated (N-linked (GlcNAc...) asparagine). PbH1 repeat units lie at residues 246 to 266 (STNI…AFGS), 277 to 303 (VENV…YFKS), and 323 to 344 (VRNV…YIDT). Cys397 and Cys403 form a disulfide bridge. Asn418 is a glycosylation site (N-linked (GlcNAc...) asparagine).

Belongs to the glycosyl hydrolase 28 family.

Its subcellular location is the secreted. It carries out the reaction [(1-&gt;4)-alpha-D-galacturonosyl](n) + H2O = alpha-D-galacturonate + [(1-&gt;4)-alpha-D-galacturonosyl](n-1). In terms of biological role, specific in hydrolyzing the terminal glycosidic bond of polygalacturonic acid and oligogalacturonates. The protein is Putative galacturan 1,4-alpha-galacturonidase A (rgxA) of Aspergillus niger.